The sequence spans 240 residues: (DL)-glycerol-3-phosphatase 2 (240 aa).

Aspartate 20 acts as the Nucleophile in catalysis. 3 residues coordinate Mg(2+): aspartate 20, aspartate 22, and aspartate 185. Residue aspartate 22 is the Proton donor of the active site.

This sequence belongs to the HAD-like hydrolase superfamily. DOG/GPP family. It depends on Mg(2+) as a cofactor. As to expression, ubiquitous with highest expression in siliques. Mainly restricted to the meristem of immature flower and vascular elements of the root, shoot, leave, siliqua and developing embryo (at the protein level).

Its subcellular location is the cytoplasm. The enzyme catalyses sn-glycerol 1-phosphate + H2O = glycerol + phosphate. It carries out the reaction sn-glycerol 3-phosphate + H2O = glycerol + phosphate. Its function is as follows. Acts as a glycerol-3-phosphatase with higher stereospecificity for L-glycerol-3-phosphate than DL-glycerol-3-phosphate. The chain is (DL)-glycerol-3-phosphatase 2 (GPP2) from Arabidopsis thaliana (Mouse-ear cress).